Here is a 158-residue protein sequence, read N- to C-terminus: Small ribosomal subunit protein uS9 (158 aa).

The interval 1 to 20 is disordered; the sequence is MTEAVETETVEPTTDEATAA. A compositionally biased stretch (low complexity) spans 10 to 20; the sequence is VEPTTDEATAA.

It belongs to the universal ribosomal protein uS9 family.

The chain is Small ribosomal subunit protein uS9 from Mycobacterium sp. (strain JLS).